The chain runs to 484 residues: Pre-glycoprotein polyprotein GP complex (484 aa).

A lipid anchor (N-myristoyl glycine; by host) is attached at Gly2. Topologically, residues 2–17 (GQLVSFFQEIPNIIQE) are extracellular. Residues 18 to 33 (AINIALIAVSLIAILK) traverse the membrane as a helical segment. The Cytoplasmic segment spans residues 34 to 58 (GLVNLWKSGLFQLLVFLILAGRSCS). Cys57 is a Zn(2+) binding site. The Extracellular portion of the chain corresponds to 59 to 423 (FKIGRSTELQ…QGKTPITLVD (365 aa)). 4 cysteine pairs are disulfide-bonded: Cys85–Cys225, Cys270–Cys283, Cys292–Cys301, and Cys355–Cys376. N-linked (GlcNAc...) asparagine; by host glycosylation is found at Asn88, Asn125, Asn178, and Asn218. N-linked (GlcNAc...) asparagine; by host glycans are attached at residues Asn356, Asn364, Asn381, and Asn386. Residues 424-444 (ICFWSTLFFTTTLFLHLVGFP) form a helical membrane-spanning segment. At 445-484 (THRHIQGEPCPLPHKLNSNGGCRCGRYPELKKPTTWHRKH) the chain is on the cytoplasmic side. Zn(2+) is bound by residues His446, His448, Cys454, His458, Cys466, Cys468, and His484.

The protein belongs to the arenaviridae GPC protein family. Interacts with glycoprotein G2. Part of the GP complex (GP-C) together with glycoprotein G1 and glycoprotein G2. The GP-complex interacts with protein Z, which interacts with ribonucleocapsid; these interactions may induce virion budding. In terms of assembly, homotrimer; disulfide-linked. In pre-fusion state, G1 homotrimers bind G2 homotrimers via ionic interactions. Part of the GP complex (GP-C) together with glycoprotein G2 and the stable signal peptide. The GP-complex interacts with protein Z, which interacts with ribonucleocapsid; these interactions may induce virion budding. As to quaternary structure, homotrimer. Interacts with the stable signal peptide. In pre-fusion state, G2 homotrimers bind G1 homotrimers via ionic interactions. Part of the GP complex (GP-C) together with glycoprotein G1 and the stable signal peptide. Acidification in the endosome triggers rearrangements, which ultimately leads to a 6 helix bundle formed by the two heptad repeat domains (HR1 and HR2) in post-fusion state. The GP-complex interacts with protein Z, which interacts with ribonucleocapsid; these interactions may induce virion budding. In terms of processing, specific enzymatic cleavages in vivo yield mature proteins. GP-C polyprotein is cleaved in the endoplasmic reticulum by the host protease MBTPS1. Only cleaved glycoprotein is incorporated into virions. The SSP remains stably associated with the GP complex following cleavage by signal peptidase and plays crucial roles in the trafficking of GP through the secretory pathway. Post-translationally, myristoylation is necessary for GP2-mediated fusion activity.

The protein resides in the virion membrane. It localises to the host endoplasmic reticulum membrane. Its subcellular location is the host Golgi apparatus membrane. It is found in the host cell membrane. In terms of biological role, functions as a cleaved signal peptide that is retained as the third component of the GP complex (GP-C). Helps to stabilize the spike complex in its native conformation. The SSP is required for efficient glycoprotein expression, post-translational maturation cleavage of G1 and G2, glycoprotein transport to the cell surface plasma membrane, formation of infectious virus particles, and acid pH-dependent glycoprotein-mediated cell fusion. Functionally, glycoprotein G1: Forms the virion spikes together with glycoprotein G2. The glycoprotein spike trimers are connected to the underlying matrix. Interacts with the host receptor leading to virus endocytosis. Forms the virion spikes together with glycoprotein G1. The glycoprotein spike trimers are connected to the underlying matrix. Class I viral fusion protein that directs fusion of viral and host endosomal membranes, leading to delivery of the nucleocapsid into the cytoplasm. Membrane fusion is mediated by irreversible conformational changes induced by acidification. The chain is Pre-glycoprotein polyprotein GP complex from Chapare mammarenavirus (isolate Human/Bolivia/810419/2003).